The following is a 442-amino-acid chain: F-box protein KIB2 (442 aa).

Positions 62–109 (SKQPVLVLDLLRSILERLSFVDFHRGRCISLEWYSASESCLAVKNPTS) constitute an F-box domain. Positions 236–243 (HKKGDENY) match the Nuclear localization signal motif.

In terms of assembly, interacts with ASK7/BIN2/SK21.

It is found in the cytoplasm. The protein resides in the nucleus. It localises to the nucleolus. Its function is as follows. Component of SCF(ASK-cullin-F-box) E3 ubiquitin ligase complexes, which may mediate the ubiquitination and subsequent proteasomal degradation of target proteins. Required for brassinosteroid (BR) signal transduction. Mediates ASK7/BIN2/SK21 inactivation both by competing with substrate binding (e.g. BZR1) and by promoting its ubiquitination and subsequent proteasomal degradation. The chain is F-box protein KIB2 from Arabidopsis thaliana (Mouse-ear cress).